A 331-amino-acid chain; its full sequence is Probable cytosolic iron-sulfur protein assembly protein Ciao1 (331 aa).

7 WD repeats span residues 12 to 51 (GHKG…WTTK), 57 to 96 (GHKR…ATLE), 97 to 136 (GHEN…EFEC), 142 to 181 (AHSQ…SDWD), 188 to 227 (SHTS…NEAG), 246 to 285 (LHTR…KRDA), and 297 to 331 (AHEQ…KLQE).

It belongs to the WD repeat CIA1 family.

Its function is as follows. Essential component of the cytosolic iron-sulfur (Fe/S) protein assembly machinery. Required for the maturation of extramitochondrial Fe/S proteins. This chain is Probable cytosolic iron-sulfur protein assembly protein Ciao1, found in Drosophila mojavensis (Fruit fly).